The following is a 435-amino-acid chain: GTPase Obg (435 aa).

Positions 6-164 (ADFVDRVKIF…RWLELELKIL (159 aa)) constitute an Obg domain. One can recognise an OBG-type G domain in the interval 165–335 (ADVGLVGYPN…LVSKLASIVR (171 aa)). GTP contacts are provided by residues 171 to 178 (GYPNVGKS), 196 to 200 (FTTLI), 217 to 220 (DIPG), 287 to 290 (NKID), and 316 to 318 (SAV). The Mg(2+) site is built by S178 and T198. The 79-residue stretch at 357 to 435 (RRLPEKFHLE…IGDFEFEYRE (79 aa)) folds into the OCT domain.

Belongs to the TRAFAC class OBG-HflX-like GTPase superfamily. OBG GTPase family. Monomer. Mg(2+) serves as cofactor.

Its subcellular location is the cytoplasm. Functionally, an essential GTPase which binds GTP, GDP and possibly (p)ppGpp with moderate affinity, with high nucleotide exchange rates and a fairly low GTP hydrolysis rate. Plays a role in control of the cell cycle, stress response, ribosome biogenesis and in those bacteria that undergo differentiation, in morphogenesis control. The polypeptide is GTPase Obg (Thermotoga petrophila (strain ATCC BAA-488 / DSM 13995 / JCM 10881 / RKU-1)).